The sequence spans 2452 residues: Lovastatin diketide synthase lovF (2452 aa).

The Ketosynthase family 3 (KS3) domain occupies 10-381 (PAPIAVVGMG…GANAHAIVER (372 aa)). Active-site for beta-ketoacyl synthase activity residues include C173, H308, and H343. Residues 496–790 (VFTGQGAQWF…PYLSCLSRGK (295 aa)) are malonyl-CoA:ACP transacylase (MAT) domain. S555 (for malonyltransferase activity) is an active-site residue. Residues 861-998 (HDLIGLQEPL…GLVRVDMDQP (138 aa)) form an N-terminal hotdog fold region. The interval 861-1166 (HDLIGLQEPL…LEGLVFQSLG (306 aa)) is dehydratase (DH) domain. The 311-residue stretch at 861-1171 (HDLIGLQEPL…FQSLGASLGT (311 aa)) folds into the PKS/mFAS DH domain. Residue H893 is the Proton acceptor; for dehydratase activity of the active site. The tract at residues 997 to 1017 (QPASSLSNPQRADPRPWSRKT) is disordered. Residues 1012 to 1171 (PWSRKTAPQD…FQSLGASLGT (160 aa)) form a C-terminal hotdog fold region. The Proton donor; for dehydratase activity role is filled by D1079. Residues 1343 to 1528 (ELVRLCCHKN…RDCDSDEFYM (186 aa)) are methyltransferase (CMet) domain. Residues 1745–2064 (GLLDSLYFRK…SGQHVGKIVV (320 aa)) are enoylreductase (ER) domain. Residues 2088–2260 (SYLVAGGLGG…AVTIDLGMVQ (173 aa)) form a ketoreductase (KR) domain region. In terms of domain architecture, Carrier spans 2373–2450 (ASIAVIMEAM…KVAEVVLQRY (78 aa)). An O-(pantetheine 4'-phosphoryl)serine modification is found at S2410.

Interacts with LovD. It depends on pantetheine 4'-phosphate as a cofactor.

The catalysed reaction is holo-[2-methylbutanoate polyketide synthase] + 2 malonyl-CoA + S-adenosyl-L-methionine + 2 NADPH + 3 H(+) = (S)-2-methylbutanoyl-[2-methylbutanoate polyketide synthase] + S-adenosyl-L-homocysteine + 2 CO2 + 2 NADP(+) + 2 CoA + H2O. The protein operates within polyketide biosynthesis; lovastatin biosynthesis. In terms of biological role, lovastatin diketide synthase; part of the gene cluster that mediates the biosynthesis of lovastatin (also known as mevinolin, mevacor or monacolin K), a hypolipidemic inhibitor of (3S)-hydroxymethylglutaryl-coenzyme A (HMG-CoA) reductase (HMGR). The first step in the biosynthesis of lovastatin is the production of dihydromonacolin L acid by the lovastatin nonaketide synthase lovB and the trans-acting enoyl reductase lovC via condensation of one acetyl-CoA unit and 8 malonyl-CoA units. Dihydromonacolin L acid is released from lovB by the thioesterase lovG. Next, dihydromonacolin L acid is oxidized by the dihydromonacolin L monooxygenase lovA twice to form monacolin J acid. The 2-methylbutyrate moiety of lovastatin is synthesized by the lovastatin diketide synthase lovF via condensation of one acetyl-CoA unit and one malonyl-CoA unit. Finally, the covalent attachment of this moiety to monacolin J acid is catalyzed by the transesterase lovD to yield lovastatin. LovD has broad substrate specificity and can also convert monacolin J to simvastatin using alpha-dimethylbutanoyl-S-methyl-3-mercaptopropionate (DMB-S-MMP) as the thioester acyl donor, and can also catalyze the reverse reaction and function as hydrolase in vitro. LovD has much higher activity with LovF-bound 2-methylbutanoate than with free diketide substrates. The polypeptide is Lovastatin diketide synthase lovF (Aspergillus terreus (strain NIH 2624 / FGSC A1156)).